Consider the following 377-residue polypeptide: DNA replication and repair protein RecF (377 aa).

30–37 contributes to the ATP binding site; sequence GQNAQGKS.

It belongs to the RecF family.

It localises to the cytoplasm. The RecF protein is involved in DNA metabolism; it is required for DNA replication and normal SOS inducibility. RecF binds preferentially to single-stranded, linear DNA. It also seems to bind ATP. In Cyanothece sp. (strain PCC 7425 / ATCC 29141), this protein is DNA replication and repair protein RecF.